An 89-amino-acid chain; its full sequence is uncharacterized protein (89 aa).

To M.jannaschii MJ1436.

This is an uncharacterized protein from Methanothermobacter thermautotrophicus (strain ATCC 29096 / DSM 1053 / JCM 10044 / NBRC 100330 / Delta H) (Methanobacterium thermoautotrophicum).